The chain runs to 62 residues: Inner membrane protein p12 (62 aa).

The chain crosses the membrane as a helical span at residues 16–36; that stretch reads LLIVAIIVVIMAIMLYYFWWM.

Belongs to the asfivirus inner membrane protein p12 family. As to quaternary structure, homomultimer; disulfide-linked. Not glycosylated.

The protein resides in the virion membrane. The polypeptide is Inner membrane protein p12 (African swine fever virus (isolate Tick/Malawi/Lil 20-1/1983) (ASFV)).